Reading from the N-terminus, the 359-residue chain is Mitochondrial glutathione transporter SLC25A39 (359 aa).

Topologically, residues 1–14 are mitochondrial intermembrane; sequence MDDQDPGGISPLQQ. Solcar repeat units lie at residues 9-151, 159-243, and 253-347; these read ISPL…LKAF, SDLY…VKSW, and TSVG…GKSF. Residues 15–35 traverse the membrane as a helical segment; that stretch reads MVASGAGAVVTSLFMTPLDVV. The Mitochondrial matrix segment spans residues 36-121; sequence KVRLQSQRPS…VKIVRHEGTR (86 aa). Residues Cys-74, Cys-78, Cys-88, and Cys-94 each contribute to the [2Fe-2S] cluster site. The helical transmembrane segment at 122 to 142 threads the bilayer; sequence TLWSGLPATLVMTVPATAIYF. Over 143-164 the chain is Mitochondrial intermembrane; that stretch reads TAYDQLKAFLCGQSLTSDLYAP. The helical transmembrane segment at 165–185 threads the bilayer; it reads MVAGALARMGTVTVVSPLELV. The Mitochondrial matrix portion of the chain corresponds to 186-214; the sequence is RTKLQAQHVSYRELASSVQAAVTQGGWRS. The helical transmembrane segment at 215–235 threads the bilayer; the sequence is LWLGWGPTALRDVPFSALYWF. Residues 236-255 lie on the Mitochondrial intermembrane side of the membrane; sequence NYELVKSWLSGLRPKDQTSV. The helical transmembrane segment at 256-276 threads the bilayer; sequence GISFVAGGISGMVAATLTLPF. At 277-317 the chain is on the mitochondrial matrix side; sequence DVVKTQRQMSLGAVEAVRVKPPRVDSTWLLLRRIRAESGTR. Residues 318-338 traverse the membrane as a helical segment; the sequence is GLFAGFLPRIIKAAPSCAIMI. The Mitochondrial intermembrane segment spans residues 339 to 359; it reads STYEFGKSFFQRLNQEQPLGR.

Belongs to the mitochondrial carrier (TC 2.A.29) family. In terms of processing, cleaved and degraded by AFG3L2; degradation by AFG3L2 is regulated by the ability of SLC25A39 to bind iron-sulfur. In absence of mitochondrial glutathione, SLC25A39 binds iron-sulfur, preventing cleavage and degradation by AFG3L2. The presence of mitochondrial glutathione prevents iron-sulfur-binding to SLC25A39, promoting cleavage and degradation by AFG3L2. Abundant expression in bone marrow, spleen, testis and kidney.

The protein resides in the mitochondrion inner membrane. It carries out the reaction glutathione(in) = glutathione(out). Its activity is regulated as follows. The activity of SLC25A39 is regulated by levels of mitochondrial glutathione via its ability to bind [2Fe-2S] iron-sulfur cluster. Upon physiological levels of mitochondrial glutathione, glutathione prevents iron-sulfur-binding to SLC25A39 promoting cleavage and degradation by AFG3L2. Upon depletion of mitochondrial glutathione, SLC25A39 binds iron-sulfur, preventing cleavage and degradation by AFG3L2. Mitochondrial transporter required for glutathione import into mitochondria. Glutathione, which plays key roles in oxidative metabolism, is produced exclusively in the cytosol and is imported in many organelles. Mitochondrial glutathione is required for the activity and stability of proteins containing iron-sulfur clusters, as well as erythropoiesis. The sequence is that of Mitochondrial glutathione transporter SLC25A39 from Mus musculus (Mouse).